Reading from the N-terminus, the 204-residue chain is dITP/XTP pyrophosphatase (204 aa).

Ser8–Lys13 provides a ligand contact to substrate. The active-site Proton acceptor is Asp73. Mg(2+) is bound at residue Asp73. Substrate-binding positions include Ser74, Phe155–Asp158, Lys179, and His184–Arg185.

This sequence belongs to the HAM1 NTPase family. Homodimer. It depends on Mg(2+) as a cofactor.

It catalyses the reaction XTP + H2O = XMP + diphosphate + H(+). The enzyme catalyses dITP + H2O = dIMP + diphosphate + H(+). It carries out the reaction ITP + H2O = IMP + diphosphate + H(+). In terms of biological role, pyrophosphatase that catalyzes the hydrolysis of nucleoside triphosphates to their monophosphate derivatives, with a high preference for the non-canonical purine nucleotides XTP (xanthosine triphosphate), dITP (deoxyinosine triphosphate) and ITP. Seems to function as a house-cleaning enzyme that removes non-canonical purine nucleotides from the nucleotide pool, thus preventing their incorporation into DNA/RNA and avoiding chromosomal lesions. This chain is dITP/XTP pyrophosphatase, found in Mycolicibacterium paratuberculosis (strain ATCC BAA-968 / K-10) (Mycobacterium paratuberculosis).